The sequence spans 397 residues: Methylthioribose kinase (397 aa).

ATP contacts are provided by residues Asn-43, Lys-60, and 114-116 (EDL). A substrate-binding site is contributed by Asp-232. An ATP-binding site is contributed by 249-251 (DPE). Arg-340 contacts substrate.

Belongs to the methylthioribose kinase family. Homodimer.

The catalysed reaction is 5-(methylsulfanyl)-D-ribose + ATP = 5-(methylsulfanyl)-alpha-D-ribose 1-phosphate + ADP + H(+). Its pathway is amino-acid biosynthesis; L-methionine biosynthesis via salvage pathway; S-methyl-5-thio-alpha-D-ribose 1-phosphate from S-methyl-5'-thioadenosine (hydrolase route): step 2/2. In terms of biological role, catalyzes the phosphorylation of methylthioribose into methylthioribose-1-phosphate. In Bacillus pumilus (strain SAFR-032), this protein is Methylthioribose kinase.